The sequence spans 59 residues: Temporin-CDYd (59 aa).

The N-terminal stretch at 1 to 22 (MFTLKKSMLLLLFLGTISLTLC) is a signal peptide. The propeptide occupies 23–42 (EEERDANEEEENGGEVKEEE).

It belongs to the frog skin active peptide (FSAP) family. Temporin subfamily. As to expression, expressed by the skin glands.

The protein localises to the secreted. Functionally, antimicrobial peptide. This Rana dybowskii (Dybovsky's frog) protein is Temporin-CDYd.